The sequence spans 344 residues: Fe-S cluster assembly protein DRE2 (344 aa).

An N-terminal SAM-like domain region spans residues 1-160 (MTSNILLLLH…KKLNNDNAST (160 aa)). The disordered stretch occupies residues 154 to 179 (NNDNASTPGLTDSSAGTSEDETATVS). A compositionally biased stretch (polar residues) spans 155-170 (NDNASTPGLTDSSAGT). Residues 161 to 223 (PGLTDSSAGT…NDLIAESNKY (63 aa)) form a linker region. Residues Cys231, Cys243, Cys246, and Cys248 each coordinate [2Fe-2S] cluster. The fe-S binding site A stretch occupies residues 231–248 (CELPNGKKRKKACKDCTC). Cys313, Cys316, Cys324, and Cys327 together coordinate [4Fe-4S] cluster. 2 short sequence motifs (cx2C motif) span residues 313 to 316 (CGSC) and 324 to 327 (CDGC). The interval 313-327 (CGSCSLGDAFRCDGC) is fe-S binding site B.

Belongs to the anamorsin family. As to quaternary structure, monomer. Interacts with TAH18. Interacts with MIA40. [2Fe-2S] cluster serves as cofactor. It depends on [4Fe-4S] cluster as a cofactor.

Its subcellular location is the cytoplasm. It localises to the mitochondrion intermembrane space. In terms of biological role, component of the cytosolic iron-sulfur (Fe-S) protein assembly (CIA) machinery required for the maturation of extramitochondrial Fe-S proteins. Part of an electron transfer chain functioning in an early step of cytosolic Fe-S biogenesis, facilitating the de novo assembly of a [4Fe-4S] cluster on the scaffold complex CFD1-NBP35. Electrons are transferred to DRE2 from NADPH via the FAD- and FMN-containing protein TAH18. TAH18-DRE2 are also required for the assembly of the diferric tyrosyl radical cofactor of ribonucleotide reductase (RNR), probably by providing electrons for reduction during radical cofactor maturation in the catalytic small subunit RNR2. The chain is Fe-S cluster assembly protein DRE2 from Candida tropicalis (strain ATCC MYA-3404 / T1) (Yeast).